We begin with the raw amino-acid sequence, 117 residues long: Ribosome-binding factor A (117 aa).

This sequence belongs to the RbfA family. In terms of assembly, monomer. Binds 30S ribosomal subunits, but not 50S ribosomal subunits or 70S ribosomes.

It is found in the cytoplasm. Functionally, one of several proteins that assist in the late maturation steps of the functional core of the 30S ribosomal subunit. Associates with free 30S ribosomal subunits (but not with 30S subunits that are part of 70S ribosomes or polysomes). Required for efficient processing of 16S rRNA. May interact with the 5'-terminal helix region of 16S rRNA. The polypeptide is Ribosome-binding factor A (Bacillus subtilis (strain 168)).